The sequence spans 221 residues: MSINNEKAIVVFSGGQDSTTCLFWTKKRFKEVIAVSFDYNQKHKLELECAKEICSKYNIEHHILDLGLLNQLAPNSLTRTDIKVDKNAPEDGVPNSFVDGRNMLFLTFVAVFAKQRGISHIITGVSQSDFSGYPDCRDVFIKSLNVTLNLAMDYEFVLHTPLMWIDKAETWKMAYDFGVLDIIKNETLTCYNGIKGNGCGECPSCKLRKKGYLKFKELYMK.

12-22 (FSGGQDSTTCL) is an ATP binding site. Zn(2+) contacts are provided by C190, C199, C202, and C205.

It belongs to the QueC family. In terms of assembly, homodimer. It depends on Zn(2+) as a cofactor.

It catalyses the reaction 7-carboxy-7-deazaguanine + NH4(+) + ATP = 7-cyano-7-deazaguanine + ADP + phosphate + H2O + H(+). It participates in purine metabolism; 7-cyano-7-deazaguanine biosynthesis. Functionally, catalyzes the ATP-dependent conversion of 7-carboxy-7-deazaguanine (CDG) to 7-cyano-7-deazaguanine (preQ(0)). This chain is 7-cyano-7-deazaguanine synthase, found in Clostridium novyi (strain NT).